The sequence spans 405 residues: Polyketide biosynthesis cytochrome P450 PksS (405 aa).

Residues 231-251 traverse the membrane as a helical segment; sequence LYSMLFLLVVAGLETTVNLLG. Cys-352 lines the heme pocket.

The protein belongs to the cytochrome P450 family.

It localises to the cell membrane. It functions in the pathway antibiotic biosynthesis; bacillaene biosynthesis. Its function is as follows. Involved in the metabolism of the antibiotic polyketide bacillaene which is involved in secondary metabolism. The substrate is dihydrobacillaene. In Bacillus subtilis (strain 168), this protein is Polyketide biosynthesis cytochrome P450 PksS (pksS).